A 158-amino-acid polypeptide reads, in one-letter code: Large ribosomal subunit protein uL15 (158 aa).

Disordered regions lie at residues 1 to 53 (MRIH…FEGG) and 138 to 158 (ESAG…SNNE). Positions 23-35 (ISAGQGASGGFGM) are enriched in gly residues. The segment covering 145 to 158 (QDLSDTSNAPSNNE) has biased composition (polar residues).

This sequence belongs to the universal ribosomal protein uL15 family. As to quaternary structure, part of the 50S ribosomal subunit.

Functionally, binds to the 23S rRNA. This chain is Large ribosomal subunit protein uL15, found in Crocosphaera subtropica (strain ATCC 51142 / BH68) (Cyanothece sp. (strain ATCC 51142)).